Consider the following 440-residue polypeptide: Trigger factor (440 aa).

The PPIase FKBP-type domain occupies Gly161–Pro257.

It belongs to the FKBP-type PPIase family. Tig subfamily.

The protein resides in the cytoplasm. The catalysed reaction is [protein]-peptidylproline (omega=180) = [protein]-peptidylproline (omega=0). Functionally, involved in protein export. Acts as a chaperone by maintaining the newly synthesized protein in an open conformation. Functions as a peptidyl-prolyl cis-trans isomerase. In Opitutus terrae (strain DSM 11246 / JCM 15787 / PB90-1), this protein is Trigger factor.